The sequence spans 478 residues: Cell division protein FtsZ homolog 2-1, chloroplastic (478 aa).

Residues 86–112 (EGTSTIVNPRKETSSGPVVEDFEEPSA) are disordered. Position 128-132 (128-132 (GGGSN)) interacts with GTP. Serine 143 carries the phosphoserine; by PGK1 modification. GTP is bound by residues 217 to 219 (GTG), glutamate 248, and arginine 252. Threonine 286 is subject to Phosphothreonine; by PGK1. Position 296 (aspartate 296) interacts with GTP.

The protein belongs to the FtsZ family. In terms of assembly, aggregates to form a contractile ring-like structure; contraction of the ring was accompanied by an increase in the filament turnover rate. Self-interacts and binds to FTSZ1 in heteromers to form two morphologically distinct types of filaments, termed type-I (smooth filaments) and -II (rough filaments), in a GTP-dependent manner; the GDP-induced disassembly is inhibited by ARC6. Interacts (via C-terminus) with ARC6; this interaction enables ARC3 binding to FTSZ2. Part of a complex made of ARC3, ARC6, FTSZ1 and FTSZ2. Binds to MCD1 in an ARC6-dependent manner. Binds to CDP1/PARC6. Part of a complex made of CDP1/PARC6, ARC3 and FtsZ proteins in the middle of the plastid; this complex enhances the dynamics of Z rings during chloroplast division. Binds to PGK1. Post-translationally, filaments containing FTSZ2-1 are stabilized when in complex with GTP but destabilized after conversion of GTP into GDP; ARC6 conteracts this destabilisation by preventing the dissociation of GDP-bound FTSZ2 molecules thus inhibiting filament disassembly whereas ARC3 promotes GTPase activity thus accelerating the conversion of GTP into GDP and triggering FtsZ2 filaments disassembly. In terms of processing, phosphorylation at Ser-143 is necessary for interactions with ARC3, ARC6, FTSZ1 and FTSZ2-2. Phosphorylations at Ser-143 and Thr-286 are required for the formation of contractile ring at the chloroplast midpoint.

Its subcellular location is the plastid. It is found in the chloroplast stroma. The protein localises to the chloroplast thylakoid membrane. Its activity is regulated as follows. GTPase activity is enhanced by ARC3. Its function is as follows. Exhibits GTPase activity which converts GTP ligands to GDP. Component of the plastid division machinery consisting in a binary fission accomplished by the simultaneous constriction of the FtsZ ring on the stromal side of the inner envelope membrane, and the ARC5 ring on the cytosolic side of the outer envelope membrane. Required for plastid division in a dose-dependent manner. In the vegetative shoot apex, at the shoot apical meristem (SAM), where the proplastid-to-chloroplast transition takes place, major contributor of plastid division in the L1 and L3 layers and contributes equally with FTSZ1 in the L2 layer. This is Cell division protein FtsZ homolog 2-1, chloroplastic from Arabidopsis thaliana (Mouse-ear cress).